The chain runs to 367 residues: GTP cyclohydrolase FolE2 (367 aa).

It belongs to the GTP cyclohydrolase IV family.

It carries out the reaction GTP + H2O = 7,8-dihydroneopterin 3'-triphosphate + formate + H(+). It functions in the pathway cofactor biosynthesis; 7,8-dihydroneopterin triphosphate biosynthesis; 7,8-dihydroneopterin triphosphate from GTP: step 1/1. In terms of biological role, converts GTP to 7,8-dihydroneopterin triphosphate. This chain is GTP cyclohydrolase FolE2, found in Ruegeria pomeroyi (strain ATCC 700808 / DSM 15171 / DSS-3) (Silicibacter pomeroyi).